A 633-amino-acid chain; its full sequence is Opioid growth factor receptor (633 aa).

M1 is subject to N-acetylmethionine. Over residues M1–A38 the composition is skewed to acidic residues. A disordered region spans residues M1 to S44. The Bipartite nuclear localization signal signature appears at R257–R286. Residues P287 to V390 form a disordered region. A phosphoserine mark is found at S327, S340, S361, S365, S403, and S452. Basic and acidic residues predominate over residues G351–R374. The interval P404–P633 is disordered. Positions A441–P455 are enriched in polar residues. 14 repeat units span residues G467–V475, G476–V484, G485–V493, G494–V502, G503–V511, E512–V520, G521–V529, G530–V538, G539–V547, G548–V556, E557–V565, E566–V574, E575–V583, and G584–V592. The segment at G467–V592 is 14 X approximate tandem repeats. Basic and acidic residues predominate over residues E505–K517. The segment covering E550–K580 has biased composition (basic and acidic residues). Phosphoserine occurs at positions 601 and 608.

Belongs to the opioid growth factor receptor family. As to expression, expressed in all tissues examined, including brain, heart, lung, liver, kidney and skeletal muscle.

The protein resides in the cytoplasm. The protein localises to the nucleus. Its function is as follows. Receptor for opioid growth factor (OGF), also known as Met-enkephalin. Seems to be involved in growth regulation. The chain is Opioid growth factor receptor (Ogfr) from Mus musculus (Mouse).